A 509-amino-acid polypeptide reads, in one-letter code: ATP synthase subunit alpha (509 aa).

Residue 169-176 (GDRQTGKT) participates in ATP binding.

Belongs to the ATPase alpha/beta chains family. As to quaternary structure, F-type ATPases have 2 components, CF(1) - the catalytic core - and CF(0) - the membrane proton channel. CF(1) has five subunits: alpha(3), beta(3), gamma(1), delta(1), epsilon(1). CF(0) has three main subunits: a(1), b(2) and c(9-12). The alpha and beta chains form an alternating ring which encloses part of the gamma chain. CF(1) is attached to CF(0) by a central stalk formed by the gamma and epsilon chains, while a peripheral stalk is formed by the delta and b chains.

The protein resides in the cell inner membrane. The catalysed reaction is ATP + H2O + 4 H(+)(in) = ADP + phosphate + 5 H(+)(out). Functionally, produces ATP from ADP in the presence of a proton gradient across the membrane. The alpha chain is a regulatory subunit. In Chelativorans sp. (strain BNC1), this protein is ATP synthase subunit alpha.